The following is a 142-amino-acid chain: Transcription antitermination protein NusB (142 aa).

Belongs to the NusB family.

Involved in transcription antitermination. Required for transcription of ribosomal RNA (rRNA) genes. Binds specifically to the boxA antiterminator sequence of the ribosomal RNA (rrn) operons. The protein is Transcription antitermination protein NusB of Latilactobacillus sakei subsp. sakei (strain 23K) (Lactobacillus sakei subsp. sakei).